A 382-amino-acid chain; its full sequence is RNA binding protein fox-1 homolog 1-like (382 aa).

2 disordered regions span residues 34 to 79 (QEAG…AAHP) and 94 to 148 (GPQH…QPKR). The segment covering 49–65 (YAPPPSYPPPGQAPPTP) has biased composition (pro residues). A compositionally biased stretch (polar residues) spans 101–110 (ESITASNTDD). Residues 147–223 (KRLHVSNIPF…RKIEVNNATA (77 aa)) form the RRM domain.

As to expression, expressed during muscle development in adaxial cells, somites, cardiac precursors, finbuds and jaw muscle cells.

It is found in the nucleus. RNA-binding protein that regulates alternative splicing events by binding to 5'-GCAUG-3' elements. Regulates alternative splicing of tissue-specific exons. The protein is RNA binding protein fox-1 homolog 1-like (rbfox1l) of Danio rerio (Zebrafish).